Reading from the N-terminus, the 262-residue chain is Acyl-[acyl-carrier-protein]--UDP-N-acetylglucosamine O-acyltransferase (262 aa).

Belongs to the transferase hexapeptide repeat family. LpxA subfamily. In terms of assembly, homotrimer.

It is found in the cytoplasm. It catalyses the reaction a (3R)-hydroxyacyl-[ACP] + UDP-N-acetyl-alpha-D-glucosamine = a UDP-3-O-[(3R)-3-hydroxyacyl]-N-acetyl-alpha-D-glucosamine + holo-[ACP]. Its pathway is glycolipid biosynthesis; lipid IV(A) biosynthesis; lipid IV(A) from (3R)-3-hydroxytetradecanoyl-[acyl-carrier-protein] and UDP-N-acetyl-alpha-D-glucosamine: step 1/6. Involved in the biosynthesis of lipid A, a phosphorylated glycolipid that anchors the lipopolysaccharide to the outer membrane of the cell. In Pectobacterium carotovorum subsp. carotovorum (strain PC1), this protein is Acyl-[acyl-carrier-protein]--UDP-N-acetylglucosamine O-acyltransferase.